The chain runs to 738 residues: Protein ALEX (738 aa).

Disordered stretches follow at residues 1–105, 155–188, 237–350, 387–516, 528–578, and 611–689; these read MSPS…EEAM, REDY…ASHA, TTFP…LPKP, MSGQ…LGQP, GEPG…LDPP, and GMRL…RPRI. Positions 257-273 are enriched in polar residues; it reads GSTTTPLSIWTAPQSQV. Over residues 279–301 the composition is skewed to basic and acidic residues; the sequence is KSREPQLRASTQRDPHLSDKQPR. Over residues 387–396 the composition is skewed to polar residues; it reads MSGQNQTEGQ. 3 stretches are compositionally biased toward pro residues: residues 410–438, 448–467, and 476–485; these read QPPP…PPSQ, PSLP…PRQP, and PGQPPSPLRS. Low complexity-rich tracts occupy residues 542–564, 615–626, and 656–671; these read PSLP…LPAG, RPASARSSPPAM, and ATRS…EAAS.

This sequence belongs to the ALEX family. In terms of assembly, interacts with the N-terminal region of the XLas isoforms of guanine nucleotide-binding protein G(s) subunit alpha.

It localises to the cell membrane. It is found in the cell projection. Its subcellular location is the ruffle. May inhibit the adenylyl cyclase-stimulating activity of guanine nucleotide-binding protein G(s) subunit alpha which is produced from the same locus in a different open reading frame. In Rattus norvegicus (Rat), this protein is Protein ALEX.